A 342-amino-acid polypeptide reads, in one-letter code: Lipopolysaccharide heptosyltransferase 1 (342 aa).

Ser-188, Ser-189, Lys-193, Glu-225, Asp-268, Ser-269, Gly-270, and His-273 together coordinate ADP-L-glycero-beta-D-manno-heptose.

Belongs to the glycosyltransferase 9 family.

It is found in the cell inner membrane. The enzyme catalyses an alpha-Kdo-(2-&gt;4)-alpha-Kdo-(2-&gt;6)-lipid A + ADP-L-glycero-beta-D-manno-heptose = an L-alpha-D-Hep-(1-&gt;5)-[alpha-Kdo-(2-&gt;4)]-alpha-Kdo-(2-&gt;6)-lipid A + ADP + H(+). The protein operates within bacterial outer membrane biogenesis; LPS core biosynthesis. Glycosyltransferase involved in the biosynthesis of the core oligosaccharide region of lipopolysaccharide (LPS). Catalyzes the addition of the first heptose unit to one 3-deoxy-D-manno-octulosonic acid (Kdo) residue of the Kdo2-lipid A module. The polypeptide is Lipopolysaccharide heptosyltransferase 1 (Campylobacter coli).